The primary structure comprises 342 residues: S-adenosylmethionine:tRNA ribosyltransferase-isomerase (342 aa).

This sequence belongs to the QueA family. In terms of assembly, monomer.

It localises to the cytoplasm. It carries out the reaction 7-aminomethyl-7-carbaguanosine(34) in tRNA + S-adenosyl-L-methionine = epoxyqueuosine(34) in tRNA + adenine + L-methionine + 2 H(+). Its pathway is tRNA modification; tRNA-queuosine biosynthesis. Transfers and isomerizes the ribose moiety from AdoMet to the 7-aminomethyl group of 7-deazaguanine (preQ1-tRNA) to give epoxyqueuosine (oQ-tRNA). The protein is S-adenosylmethionine:tRNA ribosyltransferase-isomerase of Bacillus pumilus (strain SAFR-032).